The primary structure comprises 68 residues: DNA-directed RNA polymerase subunit omega (68 aa).

It belongs to the RNA polymerase subunit omega family. The RNAP catalytic core consists of 2 alpha, 1 beta, 1 beta' and 1 omega subunit. When a sigma factor is associated with the core the holoenzyme is formed, which can initiate transcription.

It carries out the reaction RNA(n) + a ribonucleoside 5'-triphosphate = RNA(n+1) + diphosphate. Promotes RNA polymerase assembly. Latches the N- and C-terminal regions of the beta' subunit thereby facilitating its interaction with the beta and alpha subunits. The polypeptide is DNA-directed RNA polymerase subunit omega (Listeria monocytogenes serotype 4b (strain CLIP80459)).